Reading from the N-terminus, the 150-residue chain is Histone H3-like centromeric protein A (150 aa).

The disordered stretch occupies residues 1 to 55; the sequence is MRPGSTPPSRRKSRPPRRVSPPLPTTSRTSPRRPHAQQQRRASRASPKKRFRPGT. Residues 41 to 53 are compositionally biased toward basic residues; the sequence is RASRASPKKRFRP. The segment at 53-150 is H3-like; that stretch reads PGTRALMEIR…RIRGVNEGLG (98 aa).

Belongs to the histone H3 family. Component of centromeric nucleosomes, where DNA is wrapped around a histone octamer core. The octamer contains two molecules each of H2A, H2B, CENPA and H4 assembled in one CENPA-H4 heterotetramer and two H2A-H2B heterodimers. CENPA modulates the DNA-binding characteristics of nucleosomes so that protruding DNA ends have higher flexibility than in nucleosomes containing conventional histone H3.

It is found in the nucleus. It localises to the chromosome. Its subcellular location is the centromere. Its function is as follows. Histone H3-like nucleosomal protein that is specifically found in centromeric nucleosomes. Replaces conventional H3 in the nucleosome core of centromeric chromatin that serves as an assembly site for the inner kinetochore. The presence of CENPA subtly modifies the nucleosome structure and the way DNA is wrapped around the nucleosome and gives rise to protruding DNA ends that are less well-ordered and rigid compared to nucleosomes containing histone H3. May serve as an epigenetic mark that propagates centromere identity through replication and cell division. Required for recruitment and assembly of kinetochore proteins, and as a consequence required for progress through mitosis, chromosome segregation and cytokinesis. This chain is Histone H3-like centromeric protein A (cenpa), found in Xenopus laevis (African clawed frog).